A 552-amino-acid chain; its full sequence is CTP synthase (552 aa).

Residues 1-267 (MAKFIFVTGG…AEQTLKLLRM (267 aa)) are amidoligase domain. A CTP-binding site is contributed by S13. S13 provides a ligand contact to UTP. ATP contacts are provided by residues 14–19 (SIGKGI) and D71. Positions 71 and 141 each coordinate Mg(2+). CTP contacts are provided by residues 148 to 150 (DIE), 188 to 193 (KTKPTQ), and K224. Residues 188 to 193 (KTKPTQ) and K224 each bind UTP. A Glutamine amidotransferase type-1 domain is found at 292-534 (DIAIVGKYVQ…IQAAGNHKSQ (243 aa)). An L-glutamine-binding site is contributed by G354. The active-site Nucleophile; for glutamine hydrolysis is the C381. L-glutamine is bound by residues 382 to 385 (LGMQ), E405, and R462. Residues H507 and E509 contribute to the active site. The interval 533-552 (SQPISDELDNQSTEMSISLS) is disordered.

It belongs to the CTP synthase family. Homotetramer.

The catalysed reaction is UTP + L-glutamine + ATP + H2O = CTP + L-glutamate + ADP + phosphate + 2 H(+). The enzyme catalyses L-glutamine + H2O = L-glutamate + NH4(+). It catalyses the reaction UTP + NH4(+) + ATP = CTP + ADP + phosphate + 2 H(+). It participates in pyrimidine metabolism; CTP biosynthesis via de novo pathway; CTP from UDP: step 2/2. Its activity is regulated as follows. Allosterically activated by GTP, when glutamine is the substrate; GTP has no effect on the reaction when ammonia is the substrate. The allosteric effector GTP functions by stabilizing the protein conformation that binds the tetrahedral intermediate(s) formed during glutamine hydrolysis. Inhibited by the product CTP, via allosteric rather than competitive inhibition. Catalyzes the ATP-dependent amination of UTP to CTP with either L-glutamine or ammonia as the source of nitrogen. Regulates intracellular CTP levels through interactions with the four ribonucleotide triphosphates. This chain is CTP synthase, found in Picosynechococcus sp. (strain ATCC 27264 / PCC 7002 / PR-6) (Agmenellum quadruplicatum).